A 354-amino-acid chain; its full sequence is Inactive ADP-ribosyltransferase ARH2 (354 aa).

A Phosphoserine modification is found at S27.

The protein belongs to the ADP-ribosylglycohydrolase family.

It is found in the cytoplasm. The protein resides in the myofibril. Its subcellular location is the sarcomere. Its function is as follows. Required for myofibril assembly and outgrowth of the cardiac chambers in the developing heart. Appears to be catalytically inactive, showing no activity against O-acetyl-ADP-ribose. The sequence is that of Inactive ADP-ribosyltransferase ARH2 (ADPRHL1) from Pongo abelii (Sumatran orangutan).